We begin with the raw amino-acid sequence, 198 residues long: MHHRNDSQRLGKAGCPPEPSLQMANTNFLSTLSPEHCRPLAGECMNKLKCGAAEAEIMNLPERVGTFSAIPALGGISLPPGVIVMTALHSPAAASAAVTDSAFQIANLADCPQNHSSSSSSSSGGAGGANPAKKKRKRCGVCVPCKRLINCGVCSSCRNRKTGHQICKFRKCEELKKKPGTSLERTPVPSAEAFRWFF.

The interval 114 to 134 is disordered; the sequence is NHSSSSSSSSGGAGGANPAKK. The segment at 132 to 173 adopts a CXXC-type zinc-finger fold; sequence AKKKRKRCGVCVPCKRLINCGVCSSCRNRKTGHQICKFRKCE. The Zn(2+) site is built by Cys-139, Cys-142, Cys-145, Cys-151, Cys-154, and Cys-157. Residues 161 to 166 form an interaction with DVL1 region; it reads KTGHQI. Residues Cys-167 and Cys-172 each coordinate Zn(2+).

In terms of assembly, interacts with the PDZ domain of DVL1.

The protein resides in the cytoplasm. Functionally, acts as a negative regulator of the Wnt signaling pathway via its interaction with DVL1. Binds preferentially to DNA containing cytidine-phosphate-guanosine (CpG) dinucleotides over CpH (H=A, T, and C), hemimethylated-CpG and hemimethylated-hydroxymethyl-CpG. This chain is CXXC-type zinc finger protein 4 (CXXC4), found in Homo sapiens (Human).